We begin with the raw amino-acid sequence, 650 residues long: Kinesin-like protein KIF22-B (650 aa).

The Kinesin motor domain occupies 31–359; the sequence is RVRVAVRLRP…LNFAAKSKQI (329 aa). Residue 116-123 coordinates ATP; that stretch reads GPTGAGKT. The disordered stretch occupies residues 365–416; the sequence is SRETTQTVAQPAMKRPREEAEATTSSRQRKKSKTDSTESSPNSSMESTGKRK. Residues 401–411 show a composition bias toward low complexity; that stretch reads TESSPNSSMES. Residues 452–498 are a coiled coil; the sequence is KRERMALLKKWEESQMEIERLKEKQKELEQKAMEAEARLEKSNNSDL. The Important for regulated proteolytic degradation motif lies at 560–563; that stretch reads GHEN.

It belongs to the TRAFAC class myosin-kinesin ATPase superfamily. Kinesin family. Post-translationally, ubiquitinated, leading to its subsequent proteasomal degradation.

It localises to the nucleus. It is found in the cytoplasm. The protein resides in the cytoskeleton. Functionally, kinesin family member that is involved in spindle formation and the movements of chromosomes during mitosis and meiosis. Binds to microtubules and to DNA. The sequence is that of Kinesin-like protein KIF22-B (kif22-b) from Xenopus laevis (African clawed frog).